Consider the following 284-residue polypeptide: NAD kinase (284 aa).

Catalysis depends on aspartate 65, which acts as the Proton acceptor. Residues 65–66, 139–140, arginine 150, arginine 167, aspartate 169, and glutamine 239 contribute to the NAD(+) site; these read DG and ND.

The protein belongs to the NAD kinase family. It depends on a divalent metal cation as a cofactor.

It is found in the cytoplasm. The catalysed reaction is NAD(+) + ATP = ADP + NADP(+) + H(+). In terms of biological role, involved in the regulation of the intracellular balance of NAD and NADP, and is a key enzyme in the biosynthesis of NADP. Catalyzes specifically the phosphorylation on 2'-hydroxyl of the adenosine moiety of NAD to yield NADP. The polypeptide is NAD kinase (Desulfatibacillum aliphaticivorans).